Reading from the N-terminus, the 324-residue chain is Pseudouridine-5'-phosphate glycosidase (324 aa).

Catalysis depends on Glu43, which acts as the Proton donor. Substrate contacts are provided by Lys104 and Val124. Asp156 provides a ligand contact to Mn(2+). 158 to 160 (SAD) contributes to the substrate binding site. Catalysis depends on Lys177, which acts as the Nucleophile.

It belongs to the pseudouridine-5'-phosphate glycosidase family. In terms of assembly, homotrimer. Mn(2+) serves as cofactor.

It carries out the reaction D-ribose 5-phosphate + uracil = psi-UMP + H2O. In terms of biological role, catalyzes the reversible cleavage of pseudouridine 5'-phosphate (PsiMP) to ribose 5-phosphate and uracil. Functions biologically in the cleavage direction, as part of a pseudouridine degradation pathway. This Salinispora tropica (strain ATCC BAA-916 / DSM 44818 / JCM 13857 / NBRC 105044 / CNB-440) protein is Pseudouridine-5'-phosphate glycosidase.